Consider the following 273-residue polypeptide: Dermonecrotic toxin LdSicTox-alphaIB1bii (273 aa).

His-5 is a catalytic residue. Residues Glu-25 and Asp-27 each contribute to the Mg(2+) site. Catalysis depends on His-41, which acts as the Nucleophile. 2 cysteine pairs are disulfide-bonded: Cys-45–Cys-51 and Cys-47–Cys-190. Asp-85 contacts Mg(2+). The N-linked (GlcNAc...) asparagine glycan is linked to Asn-250.

It belongs to the arthropod phospholipase D family. Class II subfamily. Mg(2+) is required as a cofactor. In terms of tissue distribution, expressed by the venom gland.

Its subcellular location is the secreted. It catalyses the reaction an N-(acyl)-sphingosylphosphocholine = an N-(acyl)-sphingosyl-1,3-cyclic phosphate + choline. It carries out the reaction an N-(acyl)-sphingosylphosphoethanolamine = an N-(acyl)-sphingosyl-1,3-cyclic phosphate + ethanolamine. The enzyme catalyses a 1-acyl-sn-glycero-3-phosphocholine = a 1-acyl-sn-glycero-2,3-cyclic phosphate + choline. The catalysed reaction is a 1-acyl-sn-glycero-3-phosphoethanolamine = a 1-acyl-sn-glycero-2,3-cyclic phosphate + ethanolamine. Dermonecrotic toxins cleave the phosphodiester linkage between the phosphate and headgroup of certain phospholipids (sphingolipid and lysolipid substrates), forming an alcohol (often choline) and a cyclic phosphate. This toxin acts on sphingomyelin (SM). It may also act on ceramide phosphoethanolamine (CPE), lysophosphatidylcholine (LPC) and lysophosphatidylethanolamine (LPE), but not on lysophosphatidylserine (LPS), and lysophosphatidylglycerol (LPG). It acts by transphosphatidylation, releasing exclusively cyclic phosphate products as second products. Induces dermonecrosis, hemolysis, increased vascular permeability, edema, inflammatory response, and platelet aggregation. This Loxosceles deserta (Desert recluse spider) protein is Dermonecrotic toxin LdSicTox-alphaIB1bii.